We begin with the raw amino-acid sequence, 638 residues long: Chaperone protein DnaK (638 aa).

Position 200 is a phosphothreonine; by autocatalysis (Thr-200). The disordered stretch occupies residues 598-621 (SLHMAATAEQQSGSTGAGAGASAK).

The protein belongs to the heat shock protein 70 family.

Acts as a chaperone. This is Chaperone protein DnaK from Xylella fastidiosa (strain M23).